Here is a 197-residue protein sequence, read N- to C-terminus: GTP cyclohydrolase-2 (197 aa).

Arg50–Glu54 is a binding site for GTP. Cys55, Cys66, and Cys68 together coordinate Zn(2+). GTP contacts are provided by residues Gln71, Glu93–Arg95, and Thr115. The active-site Proton acceptor is Asp127. Arg129 serves as the catalytic Nucleophile. GTP contacts are provided by Thr150 and Lys155.

Belongs to the GTP cyclohydrolase II family. The cofactor is Zn(2+).

The catalysed reaction is GTP + 4 H2O = 2,5-diamino-6-hydroxy-4-(5-phosphoribosylamino)-pyrimidine + formate + 2 phosphate + 3 H(+). Its pathway is cofactor biosynthesis; riboflavin biosynthesis; 5-amino-6-(D-ribitylamino)uracil from GTP: step 1/4. Catalyzes the conversion of GTP to 2,5-diamino-6-ribosylamino-4(3H)-pyrimidinone 5'-phosphate (DARP), formate and pyrophosphate. The protein is GTP cyclohydrolase-2 of Neisseria gonorrhoeae (strain ATCC 700825 / FA 1090).